Here is a 334-residue protein sequence, read N- to C-terminus: Glycerol-1-phosphate dehydrogenase [NAD(P)+] (334 aa).

NAD(+) contacts are provided by residues glycine 77–aspartate 81 and threonine 99–serine 102. Aspartate 104 is a substrate binding site. Position 108 (serine 108) interacts with NAD(+). Aspartate 147 is a binding site for substrate. Aspartate 147 and histidine 225 together coordinate Zn(2+). Histidine 229 provides a ligand contact to substrate. Histidine 246 is a binding site for Zn(2+).

The protein belongs to the glycerol-1-phosphate dehydrogenase family. Zn(2+) is required as a cofactor.

It localises to the cytoplasm. The enzyme catalyses sn-glycerol 1-phosphate + NAD(+) = dihydroxyacetone phosphate + NADH + H(+). It catalyses the reaction sn-glycerol 1-phosphate + NADP(+) = dihydroxyacetone phosphate + NADPH + H(+). It functions in the pathway membrane lipid metabolism; glycerophospholipid metabolism. Its function is as follows. Catalyzes the NAD(P)H-dependent reduction of dihydroxyacetonephosphate (DHAP or glycerone phosphate) to glycerol 1-phosphate (G1P). The G1P thus generated is used as the glycerophosphate backbone of phospholipids in the cellular membranes of Archaea. This is Glycerol-1-phosphate dehydrogenase [NAD(P)+] from Methanococcus vannielii (strain ATCC 35089 / DSM 1224 / JCM 13029 / OCM 148 / SB).